A 60-amino-acid polypeptide reads, in one-letter code: Cytotoxin 3 (60 aa).

Intrachain disulfides connect cysteine 3/cysteine 21, cysteine 14/cysteine 38, cysteine 42/cysteine 53, and cysteine 54/cysteine 59.

The protein belongs to the three-finger toxin family. Short-chain subfamily. Type IA cytotoxin sub-subfamily. As to quaternary structure, monomer in solution; Homodimer and oligomer in the presence of negatively charged lipids forming a pore with a size ranging between 20 and 30 Angstroms. Expressed by the venom gland.

It localises to the secreted. It is found in the target cell membrane. Its function is as follows. Shows cytolytic activity on many different cells by forming pore in lipid membranes. In vivo, increases heart rate or kills the animal by cardiac arrest. In addition, it binds to heparin with high affinity, interacts with Kv channel-interacting protein 1 (KCNIP1) in a calcium-independent manner, and binds to integrin alpha-V/beta-3 (ITGAV/ITGB3) with moderate affinity. The chain is Cytotoxin 3 from Naja mossambica (Mozambique spitting cobra).